Here is a 633-residue protein sequence, read N- to C-terminus: Chaperone protein dnaK2 (633 aa).

Thr-197 carries the phosphothreonine; by autocatalysis modification. Residues 513 to 532 are compositionally biased toward basic and acidic residues; it reads AEQNASSDKERREKIERKNQ. Disordered stretches follow at residues 513 to 534 and 598 to 633; these read AEQN…NQAD and QQAG…TETK. A compositionally biased stretch (low complexity) spans 606-619; sequence PGAAPQDGGTTSSD. A compositionally biased stretch (acidic residues) spans 620–633; that stretch reads GGDDVIDADFTETK.

It belongs to the heat shock protein 70 family.

Functionally, acts as a chaperone. In Nostoc sp. (strain PCC 7120 / SAG 25.82 / UTEX 2576), this protein is Chaperone protein dnaK2 (dnaK2).